Here is a 1007-residue protein sequence, read N- to C-terminus: Kinesin-like protein KIN-14F (1007 aa).

One can recognise a Calponin-homology (CH) domain in the interval 41-187 (AARRNEAAGW…CVLALKSYGD (147 aa)). The Kinesin motor domain maps to 390–715 (SIRVYCRVRP…LKFAERVSTV (326 aa)). 472 to 479 (GQTGSGKT) is an ATP binding site. Positions 718 to 748 (GAARLNKESGEVKELKEQIARLKSSLAMKDS) form a coiled coil. Over residues 885 to 904 (KQYLRNNSRKKDGNEFEQQR) the composition is skewed to basic and acidic residues. Disordered regions lie at residues 885 to 924 (KQYL…ATSD) and 944 to 1007 (SENG…AGTK). The span at 963-1001 (TRTPLHSQIPSASRKTSNGNRSGRQPLSGSDSRRLSSNG) shows a compositional bias: polar residues.

Belongs to the TRAFAC class myosin-kinesin ATPase superfamily. Kinesin family. KIN-14 subfamily.

This Oryza sativa subsp. japonica (Rice) protein is Kinesin-like protein KIN-14F.